We begin with the raw amino-acid sequence, 154 residues long: 6,7-dimethyl-8-ribityllumazine synthase (154 aa).

Residues Phe26, Ala60–Glu62, and Cys84–Ile86 each bind 5-amino-6-(D-ribitylamino)uracil. Glu89–Thr90 contributes to the (2S)-2-hydroxy-3-oxobutyl phosphate binding site. His92 functions as the Proton donor in the catalytic mechanism. Position 117 (Asn117) interacts with 5-amino-6-(D-ribitylamino)uracil. Position 131 (Arg131) interacts with (2S)-2-hydroxy-3-oxobutyl phosphate.

This sequence belongs to the DMRL synthase family.

The catalysed reaction is (2S)-2-hydroxy-3-oxobutyl phosphate + 5-amino-6-(D-ribitylamino)uracil = 6,7-dimethyl-8-(1-D-ribityl)lumazine + phosphate + 2 H2O + H(+). It participates in cofactor biosynthesis; riboflavin biosynthesis; riboflavin from 2-hydroxy-3-oxobutyl phosphate and 5-amino-6-(D-ribitylamino)uracil: step 1/2. Catalyzes the formation of 6,7-dimethyl-8-ribityllumazine by condensation of 5-amino-6-(D-ribitylamino)uracil with 3,4-dihydroxy-2-butanone 4-phosphate. This is the penultimate step in the biosynthesis of riboflavin. The protein is 6,7-dimethyl-8-ribityllumazine synthase of Acidovorax ebreus (strain TPSY) (Diaphorobacter sp. (strain TPSY)).